We begin with the raw amino-acid sequence, 387 residues long: Chaperone protein DnaJ (387 aa).

The J domain maps to 6–70; the sequence is DYYETLGVSR…QKRAAYDQYG (65 aa). The segment at 143-225 adopts a CR-type zinc-finger fold; it reads GKDTKISYDR…CHGTGHEQER (83 aa). Zn(2+) contacts are provided by cysteine 156, cysteine 159, cysteine 173, cysteine 176, cysteine 199, cysteine 202, cysteine 213, and cysteine 216. CXXCXGXG motif repeat units lie at residues 156–163, 173–180, 199–206, and 213–220; these read CHTCNGSG, CHKCHGSG, CDVCGGTG, and CPTCHGTG.

This sequence belongs to the DnaJ family. As to quaternary structure, homodimer. Zn(2+) serves as cofactor.

It localises to the cytoplasm. Participates actively in the response to hyperosmotic and heat shock by preventing the aggregation of stress-denatured proteins and by disaggregating proteins, also in an autonomous, DnaK-independent fashion. Unfolded proteins bind initially to DnaJ; upon interaction with the DnaJ-bound protein, DnaK hydrolyzes its bound ATP, resulting in the formation of a stable complex. GrpE releases ADP from DnaK; ATP binding to DnaK triggers the release of the substrate protein, thus completing the reaction cycle. Several rounds of ATP-dependent interactions between DnaJ, DnaK and GrpE are required for fully efficient folding. Also involved, together with DnaK and GrpE, in the DNA replication of plasmids through activation of initiation proteins. In Lacticaseibacillus paracasei (strain ATCC 334 / BCRC 17002 / CCUG 31169 / CIP 107868 / KCTC 3260 / NRRL B-441) (Lactobacillus paracasei), this protein is Chaperone protein DnaJ.